We begin with the raw amino-acid sequence, 48 residues long: Phosphatidylserine decarboxylase proenzyme (48 aa).

The protein belongs to the phosphatidylserine decarboxylase family. Type 1 subfamily. The cofactor is pyruvate.

It carries out the reaction a 1,2-diacyl-sn-glycero-3-phospho-L-serine + H(+) = a 1,2-diacyl-sn-glycero-3-phosphoethanolamine + CO2. It functions in the pathway phospholipid metabolism; phosphatidylethanolamine biosynthesis; phosphatidylethanolamine from CDP-diacylglycerol: step 2/2. The sequence is that of Phosphatidylserine decarboxylase proenzyme (psd) from Azotobacter vinelandii.